Here is a 179-residue protein sequence, read N- to C-terminus: Signal peptidase complex subunit 2 (179 aa).

Residues 1 to 48 (MSGNNVQEEDSTFHVSNLYSETEIKKITQDFISEKIREQNFEEIVKYS) are Cytoplasmic-facing. A helical membrane pass occupies residues 49–69 (NIRIFLSLVLIVIGTYCSIFV). Over 70 to 74 (QYKKN) the chain is Extracellular. The helical transmembrane segment at 75 to 95 (PVIMIQLLVAFFVVSTTLIIF) threads the bilayer. Residues 96 to 179 (EYFFFDDVFM…AHGRTLKLKN (84 aa)) are Cytoplasmic-facing.

Belongs to the SPCS2 family. As to quaternary structure, component of the signal peptidase complex (SPC) composed of a catalytic subunit SEC11/SPC21 and three accessory subunits SPC25, SPC3/SPC22, SPC1/SPC12. The complex induces a local thinning of the ER membrane which is used to measure the length of the signal peptide (SP) h-region of protein substrates. This ensures the selectivity of the complex towards h-regions shorter than 18-20 amino acids. Within the complex, interacts with SEC11/SPC21. Component of a complex composed of SPC25 and PMV; the interaction is mediated via the transmembrane domains. The complex interacts with the SEC61 channel-forming translocon complex and is involved in the recognition and import of PEXEL motif-containing proteins into the ER for subsequent export.

It localises to the endoplasmic reticulum membrane. Its function is as follows. Component of the signal peptidase complex (SPC) which catalyzes the cleavage of N-terminal signal sequences from nascent proteins as they are translocated into the lumen of the endoplasmic reticulum. Enhances the enzymatic activity of SPC and facilitates the interactions between different components of the translocation site. Also, regulatory component of the CSP25-plasmepsin PMV complex which cleaves the pentameric localization motif RxLxE/Q/D (termed Plasmodium export element (PEXEL)) located downstream of the N-terminal secretory signal sequence of several proteins. This Plasmodium falciparum (isolate 3D7) protein is Signal peptidase complex subunit 2.